Reading from the N-terminus, the 257-residue chain is Flavodoxin/ferredoxin--NADP reductase (257 aa).

Residues 2–110 enclose the FAD-binding FR-type domain; it reads NPWINANVLK…EKSFGFFTLD (109 aa). FAD contacts are provided by residues 59–62, Y75, 83–85, and T125; these read RAYS and KLS. Residues 152–153, 182–183, R193, 223–225, and D229 contribute to the NADP(+) site; these read VR, SR, and NPA. 256 to 257 contacts FAD; sequence YW.

Belongs to the ferredoxin--NADP reductase type 1 family. It depends on FAD as a cofactor.

The protein resides in the cytoplasm. The enzyme catalyses 2 reduced [2Fe-2S]-[ferredoxin] + NADP(+) + H(+) = 2 oxidized [2Fe-2S]-[ferredoxin] + NADPH. It carries out the reaction reduced [flavodoxin] + NADP(+) = oxidized [flavodoxin] + NADPH + 2 H(+). Its function is as follows. Transports electrons between flavodoxin or ferredoxin and NADPH. The protein is Flavodoxin/ferredoxin--NADP reductase (fpr) of Buchnera aphidicola subsp. Schizaphis graminum (strain Sg).